A 230-amino-acid polypeptide reads, in one-letter code: MILIEHVLGNVKKDPVWQEKLKHATLDLLVLDQREAQKSRCRKSTTHGLDLGISLDRNVVLADGDVLAWDEETNVAVVVQINLRDVMVIDLSELKSRSPDELIKTCFELGHALGNQHWKAVTKNNEVYVPLTVATTMMDSVMRTHGFQHLPFRFVKGGEILPQLSNSEARLLFGGAEDSDTHVHVASPLDEPHGSGLHIHAIHSHGDGDSHNHDHDHSHSHGDHDHDHKH.

The tract at residues 197 to 230 (LHIHAIHSHGDGDSHNHDHDHSHSHGDHDHDHKH) is disordered. Basic and acidic residues predominate over residues 204–230 (SHGDGDSHNHDHDHSHSHGDHDHDHKH).

The protein belongs to the UreE family.

It localises to the cytoplasm. Involved in urease metallocenter assembly. Binds nickel. Probably functions as a nickel donor during metallocenter assembly. This is Urease accessory protein UreE from Yersinia aldovae.